Consider the following 60-residue polypeptide: Single-pass membrane and coiled-coil domain-containing protein 4 homolog (60 aa).

Residues 1–21 (MRKLRGGQTKETRKQKQERRE) are disordered. Over residues 8 to 21 (QTKETRKQKQERRE) the composition is skewed to basic and acidic residues. A coiled-coil region spans residues 10–33 (KETRKQKQERREENLKIQQQLKTI). The chain crosses the membrane as a helical span at residues 32 to 52 (TIVLPICGVFLMCIVVYVFLK).

It belongs to the SMCO4 family.

It is found in the membrane. The polypeptide is Single-pass membrane and coiled-coil domain-containing protein 4 homolog (Aedes aegypti (Yellowfever mosquito)).